The chain runs to 242 residues: Ras-like protein family member 11A (242 aa).

The small GTPase-like stretch occupies residues 17–241; it reads ESSSDYLLPK…SSKAKAASTL (225 aa). Residues 34 to 41, 81 to 85, and 147 to 150 each bind GTP; these read GASCVGKS, DTPGG, and NKGD.

It belongs to the small GTPase superfamily. Ras family. As to quaternary structure, interacts with UBF/UBTF.

It is found in the nucleus. It localises to the nucleolus. It carries out the reaction GTP + H2O = GDP + phosphate + H(+). Its function is as follows. Regulator of rDNA transcription. Acts in cooperation UBF/UBTF and positively regulates RNA polymerase I transcription. The protein is Ras-like protein family member 11A of Rattus norvegicus (Rat).